Here is a 520-residue protein sequence, read N- to C-terminus: Cholesterol side-chain cleavage enzyme, mitochondrial (520 aa).

The N-terminal 39 residues, 1-39 (MLVRGLPLRSVLVKGCQPLLSAPREGPGHPRVPTGEGAG), are a transit peptide targeting the mitochondrion. The interval 19-47 (LLSAPREGPGHPRVPTGEGAGMSSHSPRP) is disordered. Cysteine 461 is a binding site for heme.

It belongs to the cytochrome P450 family. Interacts with FDX1/adrenodoxin. Requires heme as cofactor.

It is found in the mitochondrion inner membrane. The enzyme catalyses 6 reduced [adrenodoxin] + cholesterol + 3 O2 + 6 H(+) = 4-methylpentanal + pregnenolone + 6 oxidized [adrenodoxin] + 4 H2O. It catalyses the reaction 2 reduced [adrenodoxin] + cholesterol + O2 + 2 H(+) = (22R)-hydroxycholesterol + 2 oxidized [adrenodoxin] + H2O. The catalysed reaction is (22R)-hydroxycholesterol + 2 reduced [adrenodoxin] + O2 + 2 H(+) = (20R,22R)-20,22-dihydroxycholesterol + 2 oxidized [adrenodoxin] + H2O. It carries out the reaction (20R,22R)-20,22-dihydroxycholesterol + 2 reduced [adrenodoxin] + O2 + 2 H(+) = 4-methylpentanal + pregnenolone + 2 oxidized [adrenodoxin] + 2 H2O. Its pathway is lipid metabolism; C21-steroid hormone metabolism. The protein operates within steroid metabolism; cholesterol metabolism. A cytochrome P450 monooxygenase that catalyzes the side-chain hydroxylation and cleavage of cholesterol to pregnenolone, the precursor of most steroid hormones. Catalyzes three sequential oxidation reactions of cholesterol, namely the hydroxylation at C22 followed with the hydroxylation at C20 to yield 20R,22R-hydroxycholesterol that is further cleaved between C20 and C22 to yield the C21-steroid pregnenolone and 4-methylpentanal. Mechanistically, uses molecular oxygen inserting one oxygen atom into a substrate and reducing the second into a water molecule. Two electrons are provided by NADPH via a two-protein mitochondrial transfer system comprising flavoprotein FDXR (adrenodoxin/ferredoxin reductase) and nonheme iron-sulfur protein FDX1 or FDX2 (adrenodoxin/ferredoxin). The sequence is that of Cholesterol side-chain cleavage enzyme, mitochondrial (CYP11A1) from Equus caballus (Horse).